A 667-amino-acid chain; its full sequence is DNA ligase (667 aa).

Residues 32–36, 81–82, and glutamate 110 each bind NAD(+); these read DSEYD and SL. Lysine 112 acts as the N6-AMP-lysine intermediate in catalysis. Residues arginine 133, glutamate 167, lysine 283, and lysine 307 each contribute to the NAD(+) site. Residues cysteine 401, cysteine 404, cysteine 419, and cysteine 424 each contribute to the Zn(2+) site. Residues 586–667 form the BRCT domain; that stretch reads EGHPEFSGKT…FVDKQNELNS (82 aa).

It belongs to the NAD-dependent DNA ligase family. LigA subfamily. Mg(2+) serves as cofactor. Mn(2+) is required as a cofactor.

The catalysed reaction is NAD(+) + (deoxyribonucleotide)n-3'-hydroxyl + 5'-phospho-(deoxyribonucleotide)m = (deoxyribonucleotide)n+m + AMP + beta-nicotinamide D-nucleotide.. In terms of biological role, DNA ligase that catalyzes the formation of phosphodiester linkages between 5'-phosphoryl and 3'-hydroxyl groups in double-stranded DNA using NAD as a coenzyme and as the energy source for the reaction. It is essential for DNA replication and repair of damaged DNA. The polypeptide is DNA ligase (Staphylococcus aureus (strain MRSA252)).